The sequence spans 115 residues: Small ribosomal subunit protein uS17 (115 aa).

This sequence belongs to the universal ribosomal protein uS17 family. Part of the 30S ribosomal subunit.

Its function is as follows. One of the primary rRNA binding proteins, it binds specifically to the 5'-end of 16S ribosomal RNA. This Granulibacter bethesdensis (strain ATCC BAA-1260 / CGDNIH1) protein is Small ribosomal subunit protein uS17.